The primary structure comprises 213 residues: LexA repressor (213 aa).

Positions 27-47 (QTEIARAFGFKGVRAAQYHLE) form a DNA-binding region, H-T-H motif. Catalysis depends on for autocatalytic cleavage activity residues Ser133 and Lys170.

The protein belongs to the peptidase S24 family. As to quaternary structure, homodimer.

The enzyme catalyses Hydrolysis of Ala-|-Gly bond in repressor LexA.. Represses a number of genes involved in the response to DNA damage (SOS response), including recA and lexA. In the presence of single-stranded DNA, RecA interacts with LexA causing an autocatalytic cleavage which disrupts the DNA-binding part of LexA, leading to derepression of the SOS regulon and eventually DNA repair. The sequence is that of LexA repressor from Xanthomonas campestris.